The sequence spans 1066 residues: Isoleucine--tRNA ligase (1066 aa).

A 'HIGH' region motif is present at residues 47-57 (PYTTGYIHLGT). The short motif at 594–598 (KMSKS) is the 'KMSKS' region element. Position 597 (Lys-597) interacts with ATP.

This sequence belongs to the class-I aminoacyl-tRNA synthetase family. IleS type 2 subfamily. As to quaternary structure, monomer. The cofactor is Zn(2+).

Its subcellular location is the cytoplasm. It catalyses the reaction tRNA(Ile) + L-isoleucine + ATP = L-isoleucyl-tRNA(Ile) + AMP + diphosphate. Its function is as follows. Catalyzes the attachment of isoleucine to tRNA(Ile). As IleRS can inadvertently accommodate and process structurally similar amino acids such as valine, to avoid such errors it has two additional distinct tRNA(Ile)-dependent editing activities. One activity is designated as 'pretransfer' editing and involves the hydrolysis of activated Val-AMP. The other activity is designated 'posttransfer' editing and involves deacylation of mischarged Val-tRNA(Ile). In Methanocorpusculum labreanum (strain ATCC 43576 / DSM 4855 / Z), this protein is Isoleucine--tRNA ligase.